Reading from the N-terminus, the 254-residue chain is Bowman-Birk type bran trypsin inhibitor (254 aa).

Positions 1–22 (MSNTTMATSTILLFLLAGLAAA) are cleaved as a signal peptide. Positions 23–118 (HGDGDTTIRL…KCTAALDGLS (96 aa)) are excised as a propeptide. 3 consecutive repeats follow at residues 46 to 120 (KPWD…LSME), 121 to 187 (RPWK…LCTP), and 188 to 251 (RPWG…CKPR). Cystine bridges form between Cys-51/Cys-248, Cys-125/Cys-185, Cys-126/Cys-143, Cys-152/Cys-159, Cys-156/Cys-172, Cys-193/Cys-248, Cys-194/Cys-209, Cys-199/Cys-207, Cys-216/Cys-223, and Cys-220/Cys-236. Positions 252 to 254 (AEN) are excised as a propeptide.

Belongs to the Bowman-Birk serine protease inhibitor family. In terms of tissue distribution, expressed in roots, leaves and flowers.

This chain is Bowman-Birk type bran trypsin inhibitor (RBBI3.3), found in Oryza sativa subsp. indica (Rice).